Consider the following 175-residue polypeptide: Phosphopantetheine adenylyltransferase (175 aa).

Serine 10 provides a ligand contact to substrate. ATP contacts are provided by residues serine 10 to phenylalanine 11 and histidine 18. Lysine 42, leucine 74, and arginine 88 together coordinate substrate. ATP-binding positions include glycine 89 to arginine 91, glutamate 99, and tryptophan 124 to serine 130.

The protein belongs to the bacterial CoaD family. As to quaternary structure, homohexamer. It depends on Mg(2+) as a cofactor.

Its subcellular location is the cytoplasm. It carries out the reaction (R)-4'-phosphopantetheine + ATP + H(+) = 3'-dephospho-CoA + diphosphate. Its pathway is cofactor biosynthesis; coenzyme A biosynthesis; CoA from (R)-pantothenate: step 4/5. Its function is as follows. Reversibly transfers an adenylyl group from ATP to 4'-phosphopantetheine, yielding dephospho-CoA (dPCoA) and pyrophosphate. The polypeptide is Phosphopantetheine adenylyltransferase (Desulfatibacillum aliphaticivorans).